The sequence spans 446 residues: tRNA modification GTPase MnmE (446 aa).

Residues arginine 28, glutamate 85, and lysine 124 each contribute to the (6S)-5-formyl-5,6,7,8-tetrahydrofolate site. The 153-residue stretch at glycine 220–glycine 372 folds into the TrmE-type G domain. Residue asparagine 230 coordinates K(+). GTP is bound by residues asparagine 230–serine 235, threonine 249–threonine 255, and aspartate 274–glycine 277. Serine 234 provides a ligand contact to Mg(2+). Residues threonine 249, isoleucine 251, and threonine 254 each coordinate K(+). Threonine 255 lines the Mg(2+) pocket. Lysine 446 serves as a coordination point for (6S)-5-formyl-5,6,7,8-tetrahydrofolate.

This sequence belongs to the TRAFAC class TrmE-Era-EngA-EngB-Septin-like GTPase superfamily. TrmE GTPase family. Homodimer. Heterotetramer of two MnmE and two MnmG subunits. K(+) serves as cofactor.

The protein localises to the cytoplasm. Functionally, exhibits a very high intrinsic GTPase hydrolysis rate. Involved in the addition of a carboxymethylaminomethyl (cmnm) group at the wobble position (U34) of certain tRNAs, forming tRNA-cmnm(5)s(2)U34. The polypeptide is tRNA modification GTPase MnmE (Thiobacillus denitrificans (strain ATCC 25259 / T1)).